The following is a 73-amino-acid chain: Disintegrin mojastin-2 (73 aa).

The region spanning 1–73 is the Disintegrin domain; sequence EAGEECDCGS…ADCPRNGLYG (73 aa). Intrachain disulfides connect Cys-6-Cys-21, Cys-8-Cys-16, Cys-15-Cys-38, Cys-29-Cys-35, Cys-34-Cys-59, and Cys-47-Cys-66. The Cell attachment site signature appears at 51–53; the sequence is RGD.

It belongs to the venom metalloproteinase (M12B) family. P-II subfamily. P-IIa sub-subfamily. Monomer (disintegrin). As to expression, expressed by the venom gland.

The protein resides in the secreted. Functionally, inhibits the three processes involved in platelet function (adhesion, activation and aggregation). It inhibits platelet adhesion to fibronectin with an IC(50) of 58.6 nM. It inhibits ATP release from platelet induced by ADP with an IC(50) of 19.5 nM on platelet-rich plasma, probably by binding to ADP receptors (P2RY1 and P2RY12). Finally, it inhibits ADP-induced platelet aggregation with IC(50) of 44.7 nM on platelet-rich plasma and 19.3 nM on whole blood, probably by binding to alpha-IIb/beta-3 (ITGA2B/ITGB3). Inhibits ADP-induced platelet aggregation (IC(50) = 13.8 nM) probably by binding to alpha-IIb/beta-3 (ITGA2B/ITGB3) located on the platelet surface. This Crotalus scutulatus scutulatus (Mojave rattlesnake) protein is Disintegrin mojastin-2.